Here is a 247-residue protein sequence, read N- to C-terminus: Carboxy-S-adenosyl-L-methionine synthase (247 aa).

S-adenosyl-L-methionine contacts are provided by residues Tyr-39, 64–66, 89–90, 117–118, Asn-132, and Arg-199; these read GCS, DN, and DI.

It belongs to the class I-like SAM-binding methyltransferase superfamily. Cx-SAM synthase family. In terms of assembly, homodimer.

It carries out the reaction prephenate + S-adenosyl-L-methionine = carboxy-S-adenosyl-L-methionine + 3-phenylpyruvate + H2O. Catalyzes the conversion of S-adenosyl-L-methionine (SAM) to carboxy-S-adenosyl-L-methionine (Cx-SAM). The chain is Carboxy-S-adenosyl-L-methionine synthase from Klebsiella pneumoniae subsp. pneumoniae (strain ATCC 700721 / MGH 78578).